The sequence spans 534 residues: CTP synthase (534 aa).

An amidoligase domain region spans residues 1–267; that stretch reads MTKYIFVTGG…DQIVCDHLKL (267 aa). Ser13 contributes to the CTP binding site. Ser13 provides a ligand contact to UTP. 14 to 19 is an ATP binding site; it reads SIGKGI. Tyr54 lines the L-glutamine pocket. Asp71 provides a ligand contact to ATP. Positions 71 and 141 each coordinate Mg(2+). CTP contacts are provided by residues 148–150, 188–193, and Lys224; these read DIE and KTKPTQ. Residues 188–193 and Lys224 each bind UTP; that span reads KTKPTQ. Residues 292–534 form the Glutamine amidotransferase type-1 domain; it reads KIALVGKYVE…FVTAAVENAK (243 aa). Residue Gly354 participates in L-glutamine binding. Cys381 serves as the catalytic Nucleophile; for glutamine hydrolysis. L-glutamine-binding positions include 382–385, Glu405, and Arg463; that span reads LGMQ. Catalysis depends on residues His508 and Glu510.

This sequence belongs to the CTP synthase family. In terms of assembly, homotetramer.

The catalysed reaction is UTP + L-glutamine + ATP + H2O = CTP + L-glutamate + ADP + phosphate + 2 H(+). It catalyses the reaction L-glutamine + H2O = L-glutamate + NH4(+). The enzyme catalyses UTP + NH4(+) + ATP = CTP + ADP + phosphate + 2 H(+). The protein operates within pyrimidine metabolism; CTP biosynthesis via de novo pathway; CTP from UDP: step 2/2. Its activity is regulated as follows. Allosterically activated by GTP, when glutamine is the substrate; GTP has no effect on the reaction when ammonia is the substrate. The allosteric effector GTP functions by stabilizing the protein conformation that binds the tetrahedral intermediate(s) formed during glutamine hydrolysis. Inhibited by the product CTP, via allosteric rather than competitive inhibition. Functionally, catalyzes the ATP-dependent amination of UTP to CTP with either L-glutamine or ammonia as the source of nitrogen. Regulates intracellular CTP levels through interactions with the four ribonucleotide triphosphates. The chain is CTP synthase from Streptococcus thermophilus (strain CNRZ 1066).